The chain runs to 355 residues: MNGTEGINFYVPLSNKTGLVRSPFEYPQYYLAEPWKYKVVCCYIFFLIFTGLPINILTLLVTFKHKKLRQPLNYILVNLAVADLFMACFGFTVTFYTAWNGYFIFGPIGCAIEGFFATLGGQVALWSLVVLAIERYIVVCKPMGNFRFSATHALMGISFTWFMSFSCAAPPLLGWSRYIPEGMQCSCGPDYYTLNPDYHNESYVLYMFGVHFVIPVVVIFFSYGRLICKVREAAAQQQESASTQKAEREVTRMVILMVLGFLLAWTPYAMVAFWIFTNKGVDFSATLMSVPAFFSKSSSLYNPIIYVLMNKQFRNCMITTICCGKNPFGDEDVSSSVSQSKTEVSSVSSSQVSPA.

Residues 1 to 36 lie on the Extracellular side of the membrane; the sequence is MNGTEGINFYVPLSNKTGLVRSPFEYPQYYLAEPWK. N-linked (GlcNAc...) asparagine glycans are attached at residues N2 and N15. The chain crosses the membrane as a helical span at residues 37-61; sequence YKVVCCYIFFLIFTGLPINILTLLV. Over 62–73 the chain is Cytoplasmic; it reads TFKHKKLRQPLN. A helical transmembrane segment spans residues 74–98; the sequence is YILVNLAVADLFMACFGFTVTFYTA. The Extracellular portion of the chain corresponds to 99–113; sequence WNGYFIFGPIGCAIE. C110 and C187 are disulfide-bonded. The chain crosses the membrane as a helical span at residues 114 to 133; the sequence is GFFATLGGQVALWSLVVLAI. Over 134 to 152 the chain is Cytoplasmic; that stretch reads ERYIVVCKPMGNFRFSATH. The chain crosses the membrane as a helical span at residues 153–176; sequence ALMGISFTWFMSFSCAAPPLLGWS. Residues 177–202 lie on the Extracellular side of the membrane; it reads RYIPEGMQCSCGPDYYTLNPDYHNES. Residue N200 is glycosylated (N-linked (GlcNAc...) asparagine). A helical membrane pass occupies residues 203–230; sequence YVLYMFGVHFVIPVVVIFFSYGRLICKV. Residues 231-252 lie on the Cytoplasmic side of the membrane; the sequence is REAAAQQQESASTQKAEREVTR. The helical transmembrane segment at 253–276 threads the bilayer; it reads MVILMVLGFLLAWTPYAMVAFWIF. The Extracellular portion of the chain corresponds to 277 to 284; that stretch reads TNKGVDFS. The chain crosses the membrane as a helical span at residues 285–309; sequence ATLMSVPAFFSKSSSLYNPIIYVLM. An N6-(retinylidene)lysine modification is found at K296. Residues 310 to 355 are Cytoplasmic-facing; sequence NKQFRNCMITTICCGKNPFGDEDVSSSVSQSKTEVSSVSSSQVSPA. S-palmitoyl cysteine attachment occurs at residues C322 and C323. A disordered region spans residues 332–355; sequence DVSSSVSQSKTEVSSVSSSQVSPA. Over residues 334–355 the composition is skewed to low complexity; it reads SSSVSQSKTEVSSVSSSQVSPA.

It belongs to the G-protein coupled receptor 1 family. Opsin subfamily. Post-translationally, phosphorylated on some or all of the serine and threonine residues present in the C-terminal region.

The protein resides in the membrane. Functionally, visual pigments are the light-absorbing molecules that mediate vision. They consist of an apoprotein, opsin, covalently linked to cis-retinal. This opsin uses a vitamin A2 chromophore. The sequence is that of Blue-sensitive opsin from Anolis carolinensis (Green anole).